The sequence spans 392 residues: NAC domain-containing protein 58 (392 aa).

One can recognise an NAC domain in the interval 9–173 (LPPGFRFHPT…DWVLCRIYKK (165 aa)). Residues 317-345 (STSAGAVVEPPAVTGKRKRSSDGGEPTIQ) are disordered.

As to expression, expressed in leaves, nodes, internodes and mature seeds. Highly expressed in roots. Expressed in leaf sheaths, flag leaves and inflorescences. Expressed in primary and lateral roots, particularly in the vascular tissues. Expressed in the primary phloem of the culm and leaf sheaths. Expressed principally in the primary phloem and in the peripheral zone of the leaf vascular bundles. Expressed in the floral tissues.

Its subcellular location is the nucleus. Its function is as follows. Transcription factor that acts as a positive regulator of the jasmonate (JA) pathway to mediate leaf senescence. May directly regulate LOX2, AOC, AOS2, AOC1 and OPR7, which are genes involved in the biosynthesis of JA. Regulates positively leaf senescence by directly targeting senescence-associated genes (SAGs) related to chlorophyll degradation, nutrient transport and other genes associated with abscisic acid-induced leaf senescence. Transcription activator that plays a role in mediating abiotic stress responses through the abscisic acid (ABA) pathway. Possesses transcriptional activator activity in yeast. The chain is NAC domain-containing protein 58 from Oryza sativa subsp. japonica (Rice).